The following is a 140-amino-acid chain: Small ribosomal subunit protein bS6 (140 aa).

A disordered region spans residues 111 to 140 (EHFTGPAGAEGSDDESTESTDEAVAETADA). A compositionally biased stretch (acidic residues) spans 121-140 (GSDDESTESTDEAVAETADA).

It belongs to the bacterial ribosomal protein bS6 family.

Its function is as follows. Binds together with bS18 to 16S ribosomal RNA. The protein is Small ribosomal subunit protein bS6 of Rhodopirellula baltica (strain DSM 10527 / NCIMB 13988 / SH1).